A 468-amino-acid polypeptide reads, in one-letter code: Uronate isomerase (468 aa).

This sequence belongs to the metallo-dependent hydrolases superfamily. Uronate isomerase family.

The catalysed reaction is D-glucuronate = D-fructuronate. It carries out the reaction aldehydo-D-galacturonate = keto-D-tagaturonate. It participates in carbohydrate metabolism; pentose and glucuronate interconversion. The polypeptide is Uronate isomerase (Lachnospira eligens (strain ATCC 27750 / DSM 3376 / VPI C15-48 / C15-B4) (Eubacterium eligens)).